A 273-amino-acid chain; its full sequence is Thioredoxin-like 1-3, chloroplastic (273 aa).

Residues 1 to 44 (MATDSFIKLNPISFNRARFDLRDFAGISPKSISSLCCISPRLIS) constitute a chloroplast transit peptide. Positions 62 to 202 (LFSKKKIPAF…FKEALEKHGR (141 aa)) constitute a Thioredoxin domain. Active-site nucleophile residues include Cys125 and Cys128. A disulfide bridge links Cys125 with Cys128.

It belongs to the thioredoxin family.

It is found in the plastid. The protein resides in the chloroplast. In terms of biological role, probable thiol-disulfide oxidoreductase that may participate in various redox reactions. This chain is Thioredoxin-like 1-3, chloroplastic, found in Arabidopsis thaliana (Mouse-ear cress).